Here is a 275-residue protein sequence, read N- to C-terminus: Trans-aconitate 2-methyltransferase (275 aa).

The protein belongs to the methyltransferase superfamily. Tam family.

Its subcellular location is the cytoplasm. The catalysed reaction is trans-aconitate + S-adenosyl-L-methionine = (E)-3-(methoxycarbonyl)pent-2-enedioate + S-adenosyl-L-homocysteine. Its function is as follows. Catalyzes the S-adenosylmethionine monomethyl esterification of trans-aconitate. The sequence is that of Trans-aconitate 2-methyltransferase from Pseudomonas paraeruginosa (strain DSM 24068 / PA7) (Pseudomonas aeruginosa (strain PA7)).